A 130-amino-acid chain; its full sequence is Probable 15 kDa heat shock protein (130 aa).

Residues 21–130 (ERVRILAPRV…LTKKIEVRSE (110 aa)) enclose the sHSP domain.

The protein belongs to the small heat shock protein (HSP20) family.

This chain is Probable 15 kDa heat shock protein (hsp15), found in Leptospira interrogans serogroup Icterohaemorrhagiae serovar Lai (strain 56601).